Consider the following 1029-residue polypeptide: Eukaryotic translation initiation factor 3 subunit A (1029 aa).

Residues 92 to 121 (LKKFIELAEQKVTEAQAKADEIQSSLESAA) adopt a coiled-coil conformation. Residues 339-523 (MTKAASFVLL…GVLTFESDIF (185 aa)) enclose the PCI domain. A coiled-coil region spans residues 606 to 903 (TRRAIIEKRK…EEEAEQRRAA (298 aa)). Composition is skewed to basic and acidic residues over residues 621–632 (ALQKKQREEENR), 644–666 (EQQR…EQDR), 797–901 (TEKR…EQRR), and 913–924 (GPAREASPERTA). 2 disordered regions span residues 621–666 (ALQK…EQDR) and 797–1029 (TEKR…KQQQ). Residues 943-960 (AKAAASAGEQPAAAQEAT) are compositionally biased toward low complexity. The segment covering 977 to 993 (ATRDGPSDSRDLSHARE) has biased composition (basic and acidic residues).

The protein belongs to the eIF-3 subunit A family. As to quaternary structure, component of the eukaryotic translation initiation factor 3 (eIF-3) complex.

The protein resides in the cytoplasm. Functionally, RNA-binding component of the eukaryotic translation initiation factor 3 (eIF-3) complex, which is involved in protein synthesis of a specialized repertoire of mRNAs and, together with other initiation factors, stimulates binding of mRNA and methionyl-tRNAi to the 40S ribosome. The eIF-3 complex specifically targets and initiates translation of a subset of mRNAs involved in cell proliferation. The polypeptide is Eukaryotic translation initiation factor 3 subunit A (Coccidioides immitis (strain RS) (Valley fever fungus)).